The primary structure comprises 357 residues: Histidinol-phosphate aminotransferase 2 (357 aa).

K215 is subject to N6-(pyridoxal phosphate)lysine.

Belongs to the class-II pyridoxal-phosphate-dependent aminotransferase family. Histidinol-phosphate aminotransferase subfamily. As to quaternary structure, homodimer. Requires pyridoxal 5'-phosphate as cofactor.

The catalysed reaction is L-histidinol phosphate + 2-oxoglutarate = 3-(imidazol-4-yl)-2-oxopropyl phosphate + L-glutamate. It functions in the pathway amino-acid biosynthesis; L-histidine biosynthesis; L-histidine from 5-phospho-alpha-D-ribose 1-diphosphate: step 7/9. This chain is Histidinol-phosphate aminotransferase 2, found in Thiobacillus denitrificans (strain ATCC 25259 / T1).